A 72-amino-acid chain; its full sequence is Translational regulator CsrA (72 aa).

The protein belongs to the CsrA/RsmA family. Homodimer; the beta-strands of each monomer intercalate to form a hydrophobic core, while the alpha-helices form wings that extend away from the core.

The protein localises to the cytoplasm. Functionally, a translational regulator that binds mRNA to regulate translation initiation and/or mRNA stability. Usually binds in the 5'-UTR at or near the Shine-Dalgarno sequence preventing ribosome-binding, thus repressing translation. Its main target seems to be the major flagellin gene, while its function is anatagonized by FliW. This chain is Translational regulator CsrA, found in Ruminiclostridium cellulolyticum (strain ATCC 35319 / DSM 5812 / JCM 6584 / H10) (Clostridium cellulolyticum).